The sequence spans 218 residues: Ribosomal RNA small subunit methyltransferase G (218 aa).

Residues G86, L91, 137–138 (AE), and R153 each bind S-adenosyl-L-methionine.

The protein belongs to the methyltransferase superfamily. RNA methyltransferase RsmG family.

The protein resides in the cytoplasm. It carries out the reaction guanosine(527) in 16S rRNA + S-adenosyl-L-methionine = N(7)-methylguanosine(527) in 16S rRNA + S-adenosyl-L-homocysteine. Its function is as follows. Specifically methylates the N7 position of guanine in position 527 of 16S rRNA. The chain is Ribosomal RNA small subunit methyltransferase G from Nitratidesulfovibrio vulgaris (strain ATCC 29579 / DSM 644 / CCUG 34227 / NCIMB 8303 / VKM B-1760 / Hildenborough) (Desulfovibrio vulgaris).